Here is a 460-residue protein sequence, read N- to C-terminus: tRNA(Ile)-lysidine synthase (460 aa).

37–42 provides a ligand contact to ATP; that stretch reads SGGADS.

The protein belongs to the tRNA(Ile)-lysidine synthase family.

The protein resides in the cytoplasm. The enzyme catalyses cytidine(34) in tRNA(Ile2) + L-lysine + ATP = lysidine(34) in tRNA(Ile2) + AMP + diphosphate + H(+). In terms of biological role, ligates lysine onto the cytidine present at position 34 of the AUA codon-specific tRNA(Ile) that contains the anticodon CAU, in an ATP-dependent manner. Cytidine is converted to lysidine, thus changing the amino acid specificity of the tRNA from methionine to isoleucine. This Treponema denticola (strain ATCC 35405 / DSM 14222 / CIP 103919 / JCM 8153 / KCTC 15104) protein is tRNA(Ile)-lysidine synthase.